The chain runs to 154 residues: Zinc finger HIT domain-containing protein 1 (154 aa).

Residues 1-72 (MVEKKTSVRS…DTGKKKKKTR (72 aa)) are disordered. The span at 14-23 (GQRRVLDRAA) shows a compositional bias: basic and acidic residues. The stretch at 23–39 (ARQRRINRQLEALENDN) forms a coiled coil. The Nuclear localization signal motif lies at 38-47 (DNFQDDPHAG). The tract at residues 72–110 (RGDHFKLRFRKNFQALLEEQNLSVAEGPNYLTACAGPPS) is interaction with NR1D2. Phosphothreonine; by MAPK11 and MAPK14 is present on Thr103. Cys117, Cys120, Cys128, Cys131, Cys136, Cys140, His144, and Cys149 together coordinate Zn(2+). The HIT-type zinc finger occupies 117 to 149 (CAVCGFPSPYTCVSCGARYCTVRCLGTHQETRC).

The protein belongs to the ZNHIT1 family. Component of the chromatin-remodeling SRCAP complex composed of at least SRCAP, DMAP1, RUVBL1, RUVBL2, ACTL6A, YEATS4, ACTR6 and ZNHIT1. Interacts with MAPK11 and MAPK14. Interacts with NR1D1 and NR2D2. Interacts (via HIT-type zinc finger) with the RUVBL1/RUVBL2 complex in the presence of ADP. Interacts with histone deacetylase HDAC1. Interacts with histone H2AZ1; the interaction results in recruitment of H2AZ1 to the MYOG promoter region. Interacts with PCID2; the interaction results in inhibition of SRCAP complex activity, preventing the deposition of histone variant H2Az1 to lymphoid fate regulator genes and restricting lymphoid lineage commitment. In terms of processing, phosphorylated on Thr by MAPK11 or MAPK14. Phosphorylation is required for MYOG induction, for deposition of histone H2AZ1 at the MYOG promoter and for SRCAP complex integrity.

Its subcellular location is the nucleus. Functionally, plays a role in chromatin remodeling by promoting the incorporation of histone variant H2AZ1/H2A.Z into the genome to regulate gene expression. Promotes SRCAP complex-mediated deposition of histone variant H2AZ1 to lymphoid fate regulator genes, enhancing lymphoid lineage commitment. Recruited to the promoter of the transcriptional activator MYOG at the early stages of muscle differentiation where it mediates binding of histone H2AZ1 to chromatin and induces muscle-specific gene expression. Maintains hematopoietic stem cell (HSC) quiescence by determining the chromatin accessibility at distal enhancers of HSC quiescence genes such as PTEN, FSTL1 and KLF4, enhancing deposition of H2AZ1 to promote their sustained transcription and restricting PI3K-AKT signaling inhibition. Plays a role in intestinal stem cell maintenance by promoting H2AZ1 deposition at the transcription start sites of genes involved in intestinal stem cell fate determination including LGR5, TGFB1 and TGFBR2, thereby contributing to gene transcription. Promotes phosphorylation of the H2AZ1 chaperone VPS72/YL1 which enhances the interaction between HZAZ1 and VPS72. Regulates the entry of male germ cells into meiosis by controlling histone H2AZ1 deposition which facilitates the expression of meiotic genes such as MEIOSIN, leading to the initiation of meiosis. Required for postnatal heart function through its role in maintenance of cardiac Ca(2+) homeostasis by modulating the expression of Ca(2+)-regulating proteins CASQ1 and ATP2A2/SERCA2A via deposition of histone H2AZ1 at their promoters. During embryonic heart development, required for mitochondrial maturation and oxidative metabolism by functioning through H2AZ1 deposition to activate transcription of metabolic genes and is also required to maintain the stability of the respiratory complex. In neural cells, increases deposition of the H2AZ1 histone variant and promotes neurite growth. Plays a role in TP53/p53-mediated apoptosis induction by stimulating the transcriptional activation of several proapoptotic p53 target genes such as PMAIP1/NOXA and BBC3/PUMA. Mediates cell cycle arrest induced in response to gamma-irradiation by enhancing recruitment of TP53/p53 to the promoter of the cell cycle inhibitor CDKN1A, leading to its transcriptional activation. Recruited to the promoter of cyclin-dependent kinase CDK6 and inhibits its transcription, possibly by decreasing the acetylation level of histone H4, leading to cell cycle arrest at the G1 phase. Plays a role in lens fiber cell differentiation by regulating the expression of cell cycle regulator CDKN1A/p21Cip1. Binds to transcriptional repressor NR1D2 and relieves it of its inhibitory effect on the transcription of apolipoprotein APOC3 without affecting its DNA-binding activity. The polypeptide is Zinc finger HIT domain-containing protein 1 (ZNHIT1) (Bos taurus (Bovine)).